The chain runs to 272 residues: MTVFAAEQQFHDAERPLPSHQARLACRAGLAETTAGVAPGFVQGNLAILPEKYAAAFHRFCQLNPKPCPIVGMSDVGNPMIPSLGIDLDIRTDLPRYRVWRDGELVEEPTDIVAHWRDDLVAFVIGCSFSFEEALLADDIPIRHIEEKVRVPMYRTNIPCEPAGPFSGPMVVSMRPLKPKDAIRAIQVTSRFPSVHGAPVHIGLPQSIGIADIAKPDYGDPVPIGPDELPVFWACGVTPQAVIAAAKVPFAITHAPGLMLVTDLKNKHLAVL.

Belongs to the D-glutamate cyclase family.

The chain is Putative hydro-lyase Rpal_1947 from Rhodopseudomonas palustris (strain TIE-1).